The chain runs to 686 residues: Glycogenin (686 aa).

4 residues coordinate UDP: leucine 13, asparagine 16, tyrosine 19, and arginine 82. Leucine 13, asparagine 16, tyrosine 19, arginine 82, lysine 91, aspartate 107, alanine 108, aspartate 109, asparagine 139, threonine 140, aspartate 166, aspartate 169, and glutamine 170 together coordinate UDP-alpha-D-glucose. Residues aspartate 107, alanine 108, and aspartate 109 each coordinate UDP. Mn(2+) is bound at residue aspartate 107. Residue aspartate 109 participates in Mn(2+) binding. Residues tyrosine 196 and tyrosine 198 are each glycosylated (O-linked (Glc...) tyrosine). Residues histidine 213, glycine 216, and lysine 219 each coordinate UDP. Residue histidine 213 participates in Mn(2+) binding. Positions 216 and 219 each coordinate UDP-alpha-D-glucose. 4 disordered regions span residues 264 to 331 (VKGE…ANFP), 381 to 444 (PEPT…RGNA), 460 to 533 (KHRR…GVPA), and 603 to 686 (KPLR…VLET). Low complexity-rich tracts occupy residues 285 to 308 (SSQSHKTQSHQTQSQNTHSTYTSH) and 398 to 416 (SAASTATPSAVASATASPT). Residues 307-686 (SHGASWDASR…TEEERDVLET (380 aa)) form a not required for catalytic activity region. Polar residues-rich tracts occupy residues 424 to 442 (VTPTTPASANPWTSFTTRG) and 471 to 483 (AATSRPTSPGRAQ). Acidic residues predominate over residues 677-686 (TEEERDVLET).

The protein belongs to the glycosyltransferase 8 family. Glycogenin subfamily. In terms of assembly, interacts with glycogen synthase gsy-1; the interaction is direct. Requires Mn(2+) as cofactor.

It is found in the cytoplasm. It localises to the vacuole. The enzyme catalyses L-tyrosyl-[glycogenin] + UDP-alpha-D-glucose = alpha-D-glucosyl-L-tyrosyl-[glycogenin] + UDP + H(+). It catalyses the reaction [1,4-alpha-D-glucosyl](n)-L-tyrosyl-[glycogenin] + UDP-alpha-D-glucose = [1,4-alpha-D-glucosyl](n+1)-L-tyrosyl-[glycogenin] + UDP + H(+). Its function is as follows. Self-glucosylating initiator of glycogen synthesis. It catalyzes the formation of a short alpha (1,4)-glucosyl chain covalently attached via a glucose 1-O-tyrosyl linkage to internal tyrosine residues and these chains act as primers for the elongation reaction catalyzed by glycogen synthase. The chain is Glycogenin from Neurospora crassa (strain ATCC 24698 / 74-OR23-1A / CBS 708.71 / DSM 1257 / FGSC 987).